Here is a 215-residue protein sequence, read N- to C-terminus: uncharacterized protein (215 aa).

The protein resides in the mitochondrion. This is an uncharacterized protein from Arabidopsis thaliana (Mouse-ear cress).